Reading from the N-terminus, the 332-residue chain is MKLNKNSELKLSTIDEKEKNLRPETLKEYMGQKNLKEILSVYIKAAKKRKESLEHLLIYGPPGLGKTTLAKIVAKELNVNFKITSGAAMERSGDLVATLSSLQMGDVLFIDEIHRLPKSIEEILYSAMEDYVLDIVLGTENEKKSIRIDLPPFTLIGATTRFGDISSPLRDRFGLILKLNYYSEDELELIIKRTSLVYNTKIDNNTLKKLVKRSRGTPRIANRLFRRIRDFADVYNKGLIDEHISEIALEKLTIDKNGLDDADYTYLKSLIEKFEGGPVGIKNIAANIGEEVSTIEDIYEPYLLKEGYIKRTKRGRIATPLTFKLFKNDKIK.

The segment at 1–182 is large ATPase domain (RuvB-L); that stretch reads MKLNKNSELK…FGLILKLNYY (182 aa). ATP contacts are provided by residues Leu-21, Arg-22, Gly-63, Lys-66, Thr-67, Thr-68, 129–131, Arg-172, Tyr-182, and Arg-219; that span reads EDY. Thr-67 is a Mg(2+) binding site. A small ATPAse domain (RuvB-S) region spans residues 183 to 253; that stretch reads SEDELELIIK…ISEIALEKLT (71 aa). The segment at 256–332 is head domain (RuvB-H); that stretch reads KNGLDDADYT…FKLFKNDKIK (77 aa). Residues Arg-311 and Arg-316 each coordinate DNA.

The protein belongs to the RuvB family. In terms of assembly, homohexamer. Forms an RuvA(8)-RuvB(12)-Holliday junction (HJ) complex. HJ DNA is sandwiched between 2 RuvA tetramers; dsDNA enters through RuvA and exits via RuvB. An RuvB hexamer assembles on each DNA strand where it exits the tetramer. Each RuvB hexamer is contacted by two RuvA subunits (via domain III) on 2 adjacent RuvB subunits; this complex drives branch migration. In the full resolvosome a probable DNA-RuvA(4)-RuvB(12)-RuvC(2) complex forms which resolves the HJ.

Its subcellular location is the cytoplasm. The catalysed reaction is ATP + H2O = ADP + phosphate + H(+). In terms of biological role, the RuvA-RuvB-RuvC complex processes Holliday junction (HJ) DNA during genetic recombination and DNA repair, while the RuvA-RuvB complex plays an important role in the rescue of blocked DNA replication forks via replication fork reversal (RFR). RuvA specifically binds to HJ cruciform DNA, conferring on it an open structure. The RuvB hexamer acts as an ATP-dependent pump, pulling dsDNA into and through the RuvAB complex. RuvB forms 2 homohexamers on either side of HJ DNA bound by 1 or 2 RuvA tetramers; 4 subunits per hexamer contact DNA at a time. Coordinated motions by a converter formed by DNA-disengaged RuvB subunits stimulates ATP hydrolysis and nucleotide exchange. Immobilization of the converter enables RuvB to convert the ATP-contained energy into a lever motion, pulling 2 nucleotides of DNA out of the RuvA tetramer per ATP hydrolyzed, thus driving DNA branch migration. The RuvB motors rotate together with the DNA substrate, which together with the progressing nucleotide cycle form the mechanistic basis for DNA recombination by continuous HJ branch migration. Branch migration allows RuvC to scan DNA until it finds its consensus sequence, where it cleaves and resolves cruciform DNA. This is Holliday junction branch migration complex subunit RuvB from Phytoplasma mali (strain AT).